The chain runs to 129 residues: Small ribosomal subunit protein uS8c (129 aa).

The protein belongs to the universal ribosomal protein uS8 family. Part of the 30S ribosomal subunit.

It localises to the plastid. The protein localises to the chloroplast. Functionally, one of the primary rRNA binding proteins, it binds directly to 16S rRNA central domain where it helps coordinate assembly of the platform of the 30S subunit. The chain is Small ribosomal subunit protein uS8c (rps8) from Oltmannsiellopsis viridis (Marine flagellate).